Consider the following 341-residue polypeptide: L-threonine 3-dehydrogenase (341 aa).

C38 contacts Zn(2+). Active-site charge relay system residues include T40 and H43. Positions 63, 64, 93, 96, 99, and 107 each coordinate Zn(2+). NAD(+) is bound by residues I175, D195, R200, 262-264, and 286-287; these read LGI and IY.

The protein belongs to the zinc-containing alcohol dehydrogenase family. As to quaternary structure, homotetramer. It depends on Zn(2+) as a cofactor.

The protein resides in the cytoplasm. The enzyme catalyses L-threonine + NAD(+) = (2S)-2-amino-3-oxobutanoate + NADH + H(+). Its pathway is amino-acid degradation; L-threonine degradation via oxydo-reductase pathway; glycine from L-threonine: step 1/2. Catalyzes the NAD(+)-dependent oxidation of L-threonine to 2-amino-3-ketobutyrate. This chain is L-threonine 3-dehydrogenase, found in Shewanella sediminis (strain HAW-EB3).